The following is a 484-amino-acid chain: Cobyric acid synthase (484 aa).

One can recognise a GATase cobBQ-type domain in the interval Gln-249–Thr-438. Catalysis depends on Cys-330, which acts as the Nucleophile. Residue His-430 is part of the active site.

This sequence belongs to the CobB/CobQ family. CobQ subfamily.

The protein operates within cofactor biosynthesis; adenosylcobalamin biosynthesis. Catalyzes amidations at positions B, D, E, and G on adenosylcobyrinic A,C-diamide. NH(2) groups are provided by glutamine, and one molecule of ATP is hydrogenolyzed for each amidation. The sequence is that of Cobyric acid synthase from Vibrio cholerae serotype O1 (strain ATCC 39315 / El Tor Inaba N16961).